The chain runs to 208 residues: Uracil phosphoribosyltransferase (208 aa).

5-phospho-alpha-D-ribose 1-diphosphate-binding positions include Arg-78, Arg-103, and 130–138; that span reads DPMLATGGS. Residues Ile-193 and 198–200 contribute to the uracil site; that span reads GDA. Asp-199 serves as a coordination point for 5-phospho-alpha-D-ribose 1-diphosphate.

It belongs to the UPRTase family. Mg(2+) is required as a cofactor.

It carries out the reaction UMP + diphosphate = 5-phospho-alpha-D-ribose 1-diphosphate + uracil. The protein operates within pyrimidine metabolism; UMP biosynthesis via salvage pathway; UMP from uracil: step 1/1. Its activity is regulated as follows. Allosterically activated by GTP. Catalyzes the conversion of uracil and 5-phospho-alpha-D-ribose 1-diphosphate (PRPP) to UMP and diphosphate. In Pasteurella multocida (strain Pm70), this protein is Uracil phosphoribosyltransferase.